Consider the following 424-residue polypeptide: CinA-like protein (424 aa).

Belongs to the CinA family.

This is CinA-like protein from Shewanella piezotolerans (strain WP3 / JCM 13877).